The chain runs to 630 residues: tRNA uridine 5-carboxymethylaminomethyl modification enzyme MnmG (630 aa).

FAD-binding positions include 14 to 19 (GAGHAG), Val-126, and Ser-181. Position 273-287 (273-287 (GPRYCPSIEDKVVRF)) interacts with NAD(+). FAD is bound at residue Gln-370.

It belongs to the MnmG family. Homodimer. Heterotetramer of two MnmE and two MnmG subunits. FAD is required as a cofactor.

The protein localises to the cytoplasm. NAD-binding protein involved in the addition of a carboxymethylaminomethyl (cmnm) group at the wobble position (U34) of certain tRNAs, forming tRNA-cmnm(5)s(2)U34. This Alkaliphilus metalliredigens (strain QYMF) protein is tRNA uridine 5-carboxymethylaminomethyl modification enzyme MnmG.